The sequence spans 537 residues: Quadr-hydrophobin (537 aa).

A signal peptide spans 1–17 (MKFITVAAALFASTSLA). Hydrophobin regions lie at residues 63–199 (GGNP…QNPI), 200–299 (GGNP…ENPT), 300–421 (GGNP…QDPL), and 422–537 (GGNP…RAII). N-linked (GlcNAc...) asparagine glycosylation is found at Asn-70 and Asn-113. 16 cysteine pairs are disulfide-bonded: Cys-134–Cys-183, Cys-144–Cys-174, Cys-145–Cys-157, Cys-184–Cys-195, Cys-234–Cys-283, Cys-244–Cys-274, Cys-245–Cys-257, Cys-284–Cys-295, Cys-356–Cys-405, Cys-366–Cys-396, Cys-367–Cys-379, Cys-406–Cys-417, Cys-471–Cys-520, Cys-481–Cys-511, Cys-482–Cys-494, and Cys-521–Cys-532.

Belongs to the cerato-ulmin hydrophobin family. As to quaternary structure, homotetramer. Further self-assembles to form highly ordered films at water-air interfaces through intermolecular interactions.

Its subcellular location is the secreted. It localises to the cell wall. In terms of biological role, aerial growth, conidiation, and dispersal of filamentous fungi in the environment rely upon a capability of their secreting small amphipathic proteins called hydrophobins (HPBs) with low sequence identity. Class I can self-assemble into an outermost layer of rodlet bundles on aerial cell surfaces, conferring cellular hydrophobicity that supports fungal growth, development and dispersal; whereas Class II form highly ordered films at water-air interfaces through intermolecular interactions but contribute nothing to the rodlet structure. The protein is Quadr-hydrophobin of Cordyceps militaris (Caterpillar fungus).